The chain runs to 763 residues: Palmitoyltransferase AKR1 (763 aa).

The span at 1–15 shows a compositional bias: polar residues; that stretch reads MEDNSEQASVSSQAS. The disordered stretch occupies residues 1-59; sequence MEDNSEQASVSSQASMRPLVSDNGDREAGAGVEVNIANDNDTSVGVDGENGNEDDDPIL. The Cytoplasmic portion of the chain corresponds to 1–307; the sequence is MEDNSEQASV…KLVKRDDHAK (307 aa). ANK repeat units lie at residues 57 to 87, 92 to 121, 126 to 155, 159 to 188, 197 to 226, 230 to 259, and 292 to 322; these read PILS…NVSS, EGVT…NVES, LEAT…SATT, QGFN…SKGI, KGRT…SVKI, GGFT…DFFQ, and NGYP…GFAF. The helical transmembrane segment at 308 to 325 threads the bilayer; the sequence is IITFLIPLLVLGFAFFGF. Over 326–330 the chain is Lumenal; it reads SHLHI. Residues 331-348 traverse the membrane as a helical segment; the sequence is LFALPVIILLLLASNKFI. Over 349 to 368 the chain is Cytoplasmic; the sequence is KSFLLPSYETKGTNSASLLK. The helical transmembrane segment at 369–389 threads the bilayer; it reads SPLIAGILFGSIFWLAFVWIL. The Lumenal portion of the chain corresponds to 390-401; that stretch reads RILPYTFTKRPL. Residues 402–422 traverse the membrane as a helical segment; sequence GNLTFCAILCFVCYSLFLLAF. The Cytoplasmic portion of the chain corresponds to 423 to 497; that stretch reads SDPGHIGSEN…YNDVGLKNHK (75 aa). The DHHC domain occupies 454 to 504; sequence SFCLETWVRKPLRSKYSYLNDALILRFDHYCPWIYNDVGLKNHKLFIFFIL. The active-site S-palmitoyl cysteine intermediate is the Cys484. The chain crosses the membrane as a helical span at residues 498-518; it reads LFIFFILALELGIFSFVKVCL. Topologically, residues 519 to 546 are lumenal; sequence KYFDELDMDGDCFILGDDDLCSGLIGDR. The chain crosses the membrane as a helical span at residues 547–567; the sequence is FTFLIMTWACIQAVWIFSLVI. Over 568-763 the chain is Cytoplasmic; the sequence is VQLFQITKGL…DPLSEIDDMV (196 aa).

The protein belongs to the DHHC palmitoyltransferase family. AKR/ZDHHC17 subfamily.

It is found in the early endosome membrane. Its subcellular location is the golgi apparatus membrane. The catalysed reaction is L-cysteinyl-[protein] + hexadecanoyl-CoA = S-hexadecanoyl-L-cysteinyl-[protein] + CoA. In terms of biological role, palmitoyltransferase specific for casein kinase 1. This is Palmitoyltransferase AKR1 (AKR1) from Candida glabrata (strain ATCC 2001 / BCRC 20586 / JCM 3761 / NBRC 0622 / NRRL Y-65 / CBS 138) (Yeast).